The following is a 184-amino-acid chain: ATP synthase subunit b, chloroplastic (184 aa).

The chain crosses the membrane as a helical span at residues 27–49 (LATNPINLSVVLGVLIFFGKGVL).

Belongs to the ATPase B chain family. In terms of assembly, F-type ATPases have 2 components, F(1) - the catalytic core - and F(0) - the membrane proton channel. F(1) has five subunits: alpha(3), beta(3), gamma(1), delta(1), epsilon(1). F(0) has four main subunits: a(1), b(1), b'(1) and c(10-14). The alpha and beta chains form an alternating ring which encloses part of the gamma chain. F(1) is attached to F(0) by a central stalk formed by the gamma and epsilon chains, while a peripheral stalk is formed by the delta, b and b' chains.

The protein localises to the plastid. It is found in the chloroplast thylakoid membrane. F(1)F(0) ATP synthase produces ATP from ADP in the presence of a proton or sodium gradient. F-type ATPases consist of two structural domains, F(1) containing the extramembraneous catalytic core and F(0) containing the membrane proton channel, linked together by a central stalk and a peripheral stalk. During catalysis, ATP synthesis in the catalytic domain of F(1) is coupled via a rotary mechanism of the central stalk subunits to proton translocation. Functionally, component of the F(0) channel, it forms part of the peripheral stalk, linking F(1) to F(0). The protein is ATP synthase subunit b, chloroplastic of Ceratophyllum demersum (Rigid hornwort).